The primary structure comprises 205 residues: Urease accessory protein UreG (205 aa).

A GTP-binding site is contributed by 10-17; it reads GPVGAGKT.

This sequence belongs to the SIMIBI class G3E GTPase family. UreG subfamily. Homodimer. UreD, UreF and UreG form a complex that acts as a GTP-hydrolysis-dependent molecular chaperone, activating the urease apoprotein by helping to assemble the nickel containing metallocenter of UreC. The UreE protein probably delivers the nickel.

It is found in the cytoplasm. In terms of biological role, facilitates the functional incorporation of the urease nickel metallocenter. This process requires GTP hydrolysis, probably effectuated by UreG. The protein is Urease accessory protein UreG of Corynebacterium glutamicum (strain ATCC 13032 / DSM 20300 / JCM 1318 / BCRC 11384 / CCUG 27702 / LMG 3730 / NBRC 12168 / NCIMB 10025 / NRRL B-2784 / 534).